The following is a 535-amino-acid chain: Signal transduction histidine-protein kinase AfsQ2 (535 aa).

Residues 1–30 (MTREHQGGTRGLAAARKGFWSGLRFTSLRL) are Cytoplasmic-facing. Residues 31–52 (RLVLVFGLVALTAAVSASGIAY) form a helical membrane-spanning segment. Residues 53–198 (WLNREAVLTR…SLEPEAKDLN (146 aa)) lie on the Extracellular side of the membrane. Residues 199 to 219 (SLAWSLGIATALALLGSALLA) form a helical membrane-spanning segment. Over 220-535 (QALATTVLKP…DRGKDAKGQV (316 aa)) the chain is Cytoplasmic. One can recognise an HAMP domain in the interval 224–276 (TTVLKPVHRLGVAARRLGEGKLDTRLRVSGTDELADLSRTFNSAAENLEKRVA). Residues 291–510 (DMSHELRTPL…VFTLRLPQDP (220 aa)) form the Histidine kinase domain. A Phosphohistidine modification is found at H294. The disordered stretch occupies residues 493–535 (ENAPEGGAVFTLRLPQDPSPPADEDGGPDEETEDRGKDAKGQV). Acidic residues predominate over residues 514-525 (ADEDGGPDEETE). Residues 526–535 (DRGKDAKGQV) are compositionally biased toward basic and acidic residues.

The protein resides in the cell membrane. It carries out the reaction ATP + protein L-histidine = ADP + protein N-phospho-L-histidine.. In terms of biological role, forms part of a two-component regulatory system AfsQ1/AfsQ2 involved in secondary metabolism. May activate AfsQ1 by phosphorylation. This chain is Signal transduction histidine-protein kinase AfsQ2 (afsQ2), found in Streptomyces coelicolor (strain ATCC BAA-471 / A3(2) / M145).